Reading from the N-terminus, the 380-residue chain is Dual-specificity RNA methyltransferase RlmN (380 aa).

The active-site Proton acceptor is the E94. The 240-residue stretch at 100–339 folds into the Radical SAM core domain; it reads DGDRATLCVS…VTVRKTRGDD (240 aa). An intrachain disulfide couples C107 to C344. [4Fe-4S] cluster-binding residues include C114, C118, and C121. S-adenosyl-L-methionine is bound by residues 168-169, S200, 222-224, and N301; these read GE and SLH. Residue C344 is the S-methylcysteine intermediate of the active site.

Belongs to the radical SAM superfamily. RlmN family. It depends on [4Fe-4S] cluster as a cofactor.

The protein localises to the cytoplasm. The catalysed reaction is adenosine(2503) in 23S rRNA + 2 reduced [2Fe-2S]-[ferredoxin] + 2 S-adenosyl-L-methionine = 2-methyladenosine(2503) in 23S rRNA + 5'-deoxyadenosine + L-methionine + 2 oxidized [2Fe-2S]-[ferredoxin] + S-adenosyl-L-homocysteine. The enzyme catalyses adenosine(37) in tRNA + 2 reduced [2Fe-2S]-[ferredoxin] + 2 S-adenosyl-L-methionine = 2-methyladenosine(37) in tRNA + 5'-deoxyadenosine + L-methionine + 2 oxidized [2Fe-2S]-[ferredoxin] + S-adenosyl-L-homocysteine. In terms of biological role, specifically methylates position 2 of adenine 2503 in 23S rRNA and position 2 of adenine 37 in tRNAs. m2A2503 modification seems to play a crucial role in the proofreading step occurring at the peptidyl transferase center and thus would serve to optimize ribosomal fidelity. This chain is Dual-specificity RNA methyltransferase RlmN, found in Vibrio atlanticus (strain LGP32) (Vibrio splendidus (strain Mel32)).